A 523-amino-acid polypeptide reads, in one-letter code: Bifunctional purine biosynthesis protein PurH (523 aa).

Positions 1 to 145 (MIKQALLSVS…KNHRDVTVIV (145 aa)) constitute an MGS-like domain.

This sequence belongs to the PurH family.

The catalysed reaction is (6R)-10-formyltetrahydrofolate + 5-amino-1-(5-phospho-beta-D-ribosyl)imidazole-4-carboxamide = 5-formamido-1-(5-phospho-D-ribosyl)imidazole-4-carboxamide + (6S)-5,6,7,8-tetrahydrofolate. It carries out the reaction IMP + H2O = 5-formamido-1-(5-phospho-D-ribosyl)imidazole-4-carboxamide. It participates in purine metabolism; IMP biosynthesis via de novo pathway; 5-formamido-1-(5-phospho-D-ribosyl)imidazole-4-carboxamide from 5-amino-1-(5-phospho-D-ribosyl)imidazole-4-carboxamide (10-formyl THF route): step 1/1. Its pathway is purine metabolism; IMP biosynthesis via de novo pathway; IMP from 5-formamido-1-(5-phospho-D-ribosyl)imidazole-4-carboxamide: step 1/1. This Cupriavidus pinatubonensis (strain JMP 134 / LMG 1197) (Cupriavidus necator (strain JMP 134)) protein is Bifunctional purine biosynthesis protein PurH.